The following is a 542-amino-acid chain: Mitogen-activated protein kinase 14 (542 aa).

A Protein kinase domain is found at 13-304 (YKIEEVIGKG…AEEALADPYF (292 aa)). ATP contacts are provided by residues 19–27 (IGKGSYGVV) and Lys42. Asp139 functions as the Proton acceptor in the catalytic mechanism. Thr175 bears the Phosphothreonine mark. Residues 175 to 177 (TDY) carry the TXY motif. Tyr177 carries the post-translational modification Phosphotyrosine. 2 disordered regions span residues 388 to 412 (STAAPPERQHNSLPRPCVVYSDNRP) and 482 to 542 (RNPA…SGHW). The span at 488–507 (PNSSVPLGSSYPRRNQTCKS) shows a compositional bias: polar residues.

Belongs to the protein kinase superfamily. CMGC Ser/Thr protein kinase family. MAP kinase subfamily. Dually phosphorylated on Thr-175 and Tyr-177, which activates the enzyme.

It catalyses the reaction L-seryl-[protein] + ATP = O-phospho-L-seryl-[protein] + ADP + H(+). The catalysed reaction is L-threonyl-[protein] + ATP = O-phospho-L-threonyl-[protein] + ADP + H(+). With respect to regulation, activated by threonine and tyrosine phosphorylation. The sequence is that of Mitogen-activated protein kinase 14 (MPK14) from Oryza sativa subsp. japonica (Rice).